The primary structure comprises 203 residues: Thymidylate kinase (203 aa).

9-16 (GPEGAGKT) contacts ATP.

This sequence belongs to the thymidylate kinase family.

It carries out the reaction dTMP + ATP = dTDP + ADP. In terms of biological role, phosphorylation of dTMP to form dTDP in both de novo and salvage pathways of dTTP synthesis. The sequence is that of Thymidylate kinase from Staphylococcus epidermidis (strain ATCC 35984 / DSM 28319 / BCRC 17069 / CCUG 31568 / BM 3577 / RP62A).